The following is a 693-amino-acid chain: Polyribonucleotide nucleotidyltransferase (693 aa).

Residues Asp-489 and Asp-495 each contribute to the Mg(2+) site. One can recognise a KH domain in the interval 556 to 615 (PQIHVMNINPAKIKDVVGRGGATVKGIVEKTGAQIDTSDSGEVKVFAKDKKSMDMAVAMI). An S1 motif domain is found at 625-693 (GQVYKGKIVK…GRVKLSLVAR (69 aa)).

It belongs to the polyribonucleotide nucleotidyltransferase family. In terms of assembly, component of the RNA degradosome, which is a multiprotein complex involved in RNA processing and mRNA degradation. Mg(2+) is required as a cofactor.

It is found in the cytoplasm. The enzyme catalyses RNA(n+1) + phosphate = RNA(n) + a ribonucleoside 5'-diphosphate. Its function is as follows. Involved in mRNA degradation. Catalyzes the phosphorolysis of single-stranded polyribonucleotides processively in the 3'- to 5'-direction. The polypeptide is Polyribonucleotide nucleotidyltransferase (Francisella tularensis subsp. tularensis (strain FSC 198)).